The chain runs to 144 residues: Large ribosomal subunit protein uL15 (144 aa).

Positions 1-53 (MRLNTLSPAQGAKQAPKRVGRGIGSGLGKTGGRGHKGQNSRTGGGVRRGFEGG) are disordered. Positions 21–31 (RGIGSGLGKTG) are enriched in gly residues.

This sequence belongs to the universal ribosomal protein uL15 family. Part of the 50S ribosomal subunit.

Binds to the 23S rRNA. This Hamiltonella defensa subsp. Acyrthosiphon pisum (strain 5AT) protein is Large ribosomal subunit protein uL15.